Consider the following 197-residue polypeptide: dTTP/UTP pyrophosphatase (197 aa).

Residue D70 is the Proton acceptor of the active site.

It belongs to the Maf family. YhdE subfamily. A divalent metal cation is required as a cofactor.

The protein localises to the cytoplasm. It catalyses the reaction dTTP + H2O = dTMP + diphosphate + H(+). It carries out the reaction UTP + H2O = UMP + diphosphate + H(+). Nucleoside triphosphate pyrophosphatase that hydrolyzes dTTP and UTP. May have a dual role in cell division arrest and in preventing the incorporation of modified nucleotides into cellular nucleic acids. The chain is dTTP/UTP pyrophosphatase (yhdE) from Escherichia coli O157:H7.